The sequence spans 150 residues: Arginine repressor (150 aa).

This sequence belongs to the ArgR family.

The protein localises to the cytoplasm. Its pathway is amino-acid biosynthesis; L-arginine biosynthesis [regulation]. Regulates arginine biosynthesis genes. This is Arginine repressor from Clostridium acetobutylicum (strain ATCC 824 / DSM 792 / JCM 1419 / IAM 19013 / LMG 5710 / NBRC 13948 / NRRL B-527 / VKM B-1787 / 2291 / W).